The following is a 652-amino-acid chain: DNA mismatch repair protein MutL (652 aa).

The protein belongs to the DNA mismatch repair MutL/HexB family.

This protein is involved in the repair of mismatches in DNA. It is required for dam-dependent methyl-directed DNA mismatch repair. May act as a 'molecular matchmaker', a protein that promotes the formation of a stable complex between two or more DNA-binding proteins in an ATP-dependent manner without itself being part of a final effector complex. This Aliivibrio salmonicida (strain LFI1238) (Vibrio salmonicida (strain LFI1238)) protein is DNA mismatch repair protein MutL.